A 357-amino-acid polypeptide reads, in one-letter code: Aminomethyltransferase (357 aa).

Belongs to the GcvT family. In terms of assembly, the glycine cleavage system is composed of four proteins: P, T, L and H.

The enzyme catalyses N(6)-[(R)-S(8)-aminomethyldihydrolipoyl]-L-lysyl-[protein] + (6S)-5,6,7,8-tetrahydrofolate = N(6)-[(R)-dihydrolipoyl]-L-lysyl-[protein] + (6R)-5,10-methylene-5,6,7,8-tetrahydrofolate + NH4(+). Its function is as follows. The glycine cleavage system catalyzes the degradation of glycine. This Halothermothrix orenii (strain H 168 / OCM 544 / DSM 9562) protein is Aminomethyltransferase.